Consider the following 1365-residue polypeptide: Histone-lysine N-methyltransferase NSD2 (1365 aa).

Threonine 110 and threonine 114 each carry phosphothreonine. At serine 121 the chain carries Phosphoserine. The interval 149-170 (ADVSQSEENGQKPENKARRNRK) is disordered. A Phosphoserine modification is found at serine 172. Residues 222–286 (VGDLVWSKVS…FEKSLVAFEG (65 aa)) form the PWWP 1 domain. Serine 376 is modified (phosphoserine). Disordered stretches follow at residues 376-455 (SSGV…RKGD) and 516-658 (EDSG…SKKS). Phosphothreonine is present on threonine 422. Residues 453–521 (KGDAASQFLV…VQAEEDSGNV (69 aa)) constitute a DNA-binding region (HMG box). Threonine 544 carries the post-translational modification Phosphothreonine. Basic and acidic residues predominate over residues 552–567 (DKHSLRKRDTITDKTA). A compositionally biased stretch (polar residues) spans 580–590 (SLKSQAATKNL). The segment covering 606–622 (AASSALGFSKSSSPSAS) has biased composition (low complexity). Serine 614 is modified (phosphoserine). The span at 632-648 (PGDEPSESPYESADETQ) shows a compositional bias: acidic residues. 3 PHD-type zinc fingers span residues 667–713 (EYVC…CASG), 714–770 (IHSC…CHAS), and 831–875 (VSWC…CRAG). Residues 880–942 (FQDIIWVKLG…QARVFPYMEG (63 aa)) enclose the PWWP 2 domain. One can recognise an AWS domain in the interval 1011-1061 (SEIPKCNCKPTDENPCGFDSECLNRMLMFECHPQVCPAGEFCQNQCFTKRQ). Residues cysteine 1016, cysteine 1018, cysteine 1026, cysteine 1032, cysteine 1041, cysteine 1046, and cysteine 1052 each coordinate Zn(2+). Residues 1063-1180 (PETKIIKTDG…AGTELTFNYN (118 aa)) form the SET domain. S-adenosyl-L-methionine contacts are provided by residues tryptophan 1075, 1115–1118 (THFY), and 1141–1142 (NH). Residue cysteine 1144 coordinates Zn(2+). S-adenosyl-L-methionine is bound at residue asparagine 1186. Residues 1187–1203 (EKTVCRCGASNCSGFLG) enclose the Post-SET domain. Cysteine 1191 provides a ligand contact to Zn(2+). Arginine 1192 contacts S-adenosyl-L-methionine. Zn(2+)-binding residues include cysteine 1193 and cysteine 1198. The tract at residues 1207–1232 (KTSTTLSSEEKGKKTKKKTRRRRAKG) is disordered. Positions 1219–1230 (KKTKKKTRRRRA) are enriched in basic residues. Residues 1239–1286 (EDECFRCGDGGQLVLCDRKFCTKAYHLSCLGLGKRPFGKWECPWHHCD) form a PHD-type 4; atypical zinc finger. The segment at 1333-1365 (VRSTKTEKPPPEPGKPKGKRRRRRGWRRVTEGK) is disordered. A compositionally biased stretch (basic residues) spans 1348-1359 (PKGKRRRRRGWR).

The protein belongs to the class V-like SAM-binding methyltransferase superfamily. Histone-lysine methyltransferase family. SET2 subfamily. Interacts with HDAC1. Interacts (via PHD-type zinc fingers 1, 2 and 3) with SALL1. Interacts (via PHD-type 1, 2 and 3) with SALL4. Interacts with NANOG. Interacts with OGT. Interacts (via HMG box) with NKX2-5. As to expression, widely expressed. Predominantly expressed in thymus and testis.

It localises to the nucleus. Its subcellular location is the chromosome. The protein localises to the cytoplasm. It is found in the nucleolus. The catalysed reaction is L-lysyl(36)-[histone H3] + S-adenosyl-L-methionine = N(6)-methyl-L-lysyl(36)-[histone H3] + S-adenosyl-L-homocysteine + H(+). It catalyses the reaction L-lysyl(36)-[histone H3] + 2 S-adenosyl-L-methionine = N(6),N(6)-dimethyl-L-lysyl(36)-[histone H3] + 2 S-adenosyl-L-homocysteine + 2 H(+). Its function is as follows. Histone methyltransferase which specifically dimethylates nucleosomal histone H3 at 'Lys-36' (H3K36me2). Also monomethylates nucleosomal histone H3 at 'Lys-36' (H3K36me) in vitro. Does not trimethylate nucleosomal histone H3 at 'Lys-36' (H3K36me3). However, specifically trimethylates histone H3 at 'Lys-36' (H3K36me3) at euchromatic regions in embryonic stem (ES) cells. By methylating histone H3 at 'Lys-36', involved in the regulation of gene transcription during various biological processes. In ES cells, associates with developmental transcription factors such as SALL1 and represses inappropriate gene transcription mediated by histone deacetylation. During heart development, associates with transcription factor NKX2-5 to repress transcription of NKX2-5 target genes. Plays an essential role in adipogenesis, by regulating expression of genes involved in pre-adipocyte differentiation. During T-cell receptor (TCR) and CD28-mediated T-cell activation, promotes the transcription of transcription factor BCL6 which is required for follicular helper T (Tfh) cell differentiation. During B-cell development, required for the generation of the B1 lineage. During B2 cell activation, may contribute to the control of isotype class switch recombination (CRS), splenic germinal center formation, and the humoral immune response. Plays a role in class switch recombination of the immunoglobulin heavy chain (IgH) locus during B-cell activation. By regulating the methylation of histone H3 at 'Lys-36' and histone H4 at 'Lys-20' at the IgH locus, involved in TP53BP1 recruitment to the IgH switch region and promotes the transcription of IgA. Histone methyltransferase which specifically dimethylates nucleosomal histone H3 at 'Lys-36' (H3K36me2). Functionally, histone methyltransferase which specifically dimethylates nucleosomal histone H3 at 'Lys-36' (H3K36me2). Methylation of histone H3 at 'Lys-27' is controversial. Mono-, di- or tri-methylates histone H3 at 'Lys-27' (H3K27me, H3K27me2 and H3K27me3). Does not methylate histone H3 at 'Lys-27'. May act as a transcription regulator that binds DNA and suppresses IL5 transcription through HDAC recruitment. The sequence is that of Histone-lysine N-methyltransferase NSD2 from Homo sapiens (Human).